The chain runs to 161 residues: Dihydrofolate reductase type 1 from Tn4003 (161 aa).

The 156-residue stretch at 2–157 folds into the DHFR domain; that stretch reads TLSIIVAHDK…IPHTFLHLVR (156 aa). 6–8 is a substrate binding site; that stretch reads IVA. NADP(+)-binding positions include 7-8 and 15-20; these read VA and IGYQNQ. D28 is a substrate binding site. NADP(+) is bound at residue 44–47; that stretch reads ARKT. A substrate-binding site is contributed by R58. Residues 63-66 and 93-98 each bind NADP(+); these read LTNQ and FGGQTL. A substrate-binding site is contributed by T112.

This sequence belongs to the dihydrofolate reductase family.

It catalyses the reaction (6S)-5,6,7,8-tetrahydrofolate + NADP(+) = 7,8-dihydrofolate + NADPH + H(+). It participates in cofactor biosynthesis; tetrahydrofolate biosynthesis; 5,6,7,8-tetrahydrofolate from 7,8-dihydrofolate: step 1/1. Functionally, key enzyme in folate metabolism. Catalyzes an essential reaction for de novo glycine and purine synthesis, and for DNA precursor synthesis. The polypeptide is Dihydrofolate reductase type 1 from Tn4003 (dfrA) (Staphylococcus aureus).